The sequence spans 280 residues: 4-diphosphocytidyl-2-C-methyl-D-erythritol kinase (280 aa).

K8 is a catalytic residue. 91–101 serves as a coordination point for ATP; that stretch reads PVSAGLAGGST. Residue D133 is part of the active site.

This sequence belongs to the GHMP kinase family. IspE subfamily.

It carries out the reaction 4-CDP-2-C-methyl-D-erythritol + ATP = 4-CDP-2-C-methyl-D-erythritol 2-phosphate + ADP + H(+). The protein operates within isoprenoid biosynthesis; isopentenyl diphosphate biosynthesis via DXP pathway; isopentenyl diphosphate from 1-deoxy-D-xylulose 5-phosphate: step 3/6. Its function is as follows. Catalyzes the phosphorylation of the position 2 hydroxy group of 4-diphosphocytidyl-2C-methyl-D-erythritol. The polypeptide is 4-diphosphocytidyl-2-C-methyl-D-erythritol kinase (Clostridium beijerinckii (strain ATCC 51743 / NCIMB 8052) (Clostridium acetobutylicum)).